A 251-amino-acid polypeptide reads, in one-letter code: Cathelicidin-B1 (251 aa).

An N-terminal signal peptide occupies residues 1 to 20 (MGRMWASEVLLLLLLGSSRA). The propeptide occupies 21–211 (VTPGLDVSTA…ELRCRPLRPQ (191 aa)). The interval 29 to 109 (TAPGLDGSIP…TITPKQDGSI (81 aa)) is disordered. Intrachain disulfides connect Cys-172-Cys-181 and Cys-189-Cys-205.

It belongs to the cathelicidin family. Detected in bursa of Fabricius, in filamentous structures surrounding the basal and lateral surfaces of bursal M cells (at protein level). Detected in bursa of Fabricius, in secretory enterocytes of the interfollicular bursal epithelium, but not in M cells.

The protein resides in the secreted. Has potent antimicrobial activity against Gram-positive and Gram-negative bacteria (in vitro). May play a role in the innate immune response. The polypeptide is Cathelicidin-B1 (CATHB1) (Gallus gallus (Chicken)).